Reading from the N-terminus, the 367-residue chain is NADH-quinone oxidoreductase subunit H (367 aa).

Helical transmembrane passes span 19-39 (ALFI…AYLV), 87-107 (ICFL…WAVI), 132-152 (IGVL…IIAG), 178-198 (IGLT…GEIV), 204-224 (MPYW…ISAL), 266-286 (ILIN…PLNI), 291-311 (IIPG…CFIW), and 328-348 (GWKV…SILV).

The protein belongs to the complex I subunit 1 family. As to quaternary structure, NDH-1 is composed of 14 different subunits. Subunits NuoA, H, J, K, L, M, N constitute the membrane sector of the complex.

The protein resides in the cell inner membrane. It carries out the reaction a quinone + NADH + 5 H(+)(in) = a quinol + NAD(+) + 4 H(+)(out). Its function is as follows. NDH-1 shuttles electrons from NADH, via FMN and iron-sulfur (Fe-S) centers, to quinones in the respiratory chain. The immediate electron acceptor for the enzyme in this species is believed to be ubiquinone. Couples the redox reaction to proton translocation (for every two electrons transferred, four hydrogen ions are translocated across the cytoplasmic membrane), and thus conserves the redox energy in a proton gradient. This subunit may bind ubiquinone. The sequence is that of NADH-quinone oxidoreductase subunit H from Ehrlichia chaffeensis (strain ATCC CRL-10679 / Arkansas).